We begin with the raw amino-acid sequence, 442 residues long: Armadillo-like helical domain containing protein 1 (442 aa).

This chain is Armadillo-like helical domain containing protein 1, found in Bos taurus (Bovine).